The primary structure comprises 236 residues: Uridylate kinase (236 aa).

12–15 (KISG) is a binding site for ATP. The segment at 20 to 25 (GKKGFG) is involved in allosteric activation by GTP. Residue Gly54 coordinates UMP. ATP contacts are provided by Gly55 and Arg59. UMP contacts are provided by residues Asp72 and 133-140 (TGNPYFST). Positions 166 and 169 each coordinate ATP.

This sequence belongs to the UMP kinase family. Homohexamer.

The protein localises to the cytoplasm. The enzyme catalyses UMP + ATP = UDP + ADP. The protein operates within pyrimidine metabolism; CTP biosynthesis via de novo pathway; UDP from UMP (UMPK route): step 1/1. Its activity is regulated as follows. Allosterically activated by GTP. Inhibited by UTP. Functionally, catalyzes the reversible phosphorylation of UMP to UDP. This chain is Uridylate kinase, found in Clostridium novyi (strain NT).